The chain runs to 102 residues: Large ribosomal subunit protein bL21 (102 aa).

The protein belongs to the bacterial ribosomal protein bL21 family. Part of the 50S ribosomal subunit. Contacts protein L20.

This protein binds to 23S rRNA in the presence of protein L20. In Pseudarthrobacter chlorophenolicus (strain ATCC 700700 / DSM 12829 / CIP 107037 / JCM 12360 / KCTC 9906 / NCIMB 13794 / A6) (Arthrobacter chlorophenolicus), this protein is Large ribosomal subunit protein bL21.